The chain runs to 85 residues: ATP synthase subunit c (85 aa).

Helical transmembrane passes span 10-30 and 53-73; these read IAVA…FAIL and FIVA…ALFF.

It belongs to the ATPase C chain family. As to quaternary structure, F-type ATPases have 2 components, F(1) - the catalytic core - and F(0) - the membrane proton channel. F(1) has five subunits: alpha(3), beta(3), gamma(1), delta(1), epsilon(1). F(0) has three main subunits: a(1), b(2) and c(10-14). The alpha and beta chains form an alternating ring which encloses part of the gamma chain. F(1) is attached to F(0) by a central stalk formed by the gamma and epsilon chains, while a peripheral stalk is formed by the delta and b chains.

The protein localises to the cell inner membrane. F(1)F(0) ATP synthase produces ATP from ADP in the presence of a proton or sodium gradient. F-type ATPases consist of two structural domains, F(1) containing the extramembraneous catalytic core and F(0) containing the membrane proton channel, linked together by a central stalk and a peripheral stalk. During catalysis, ATP synthesis in the catalytic domain of F(1) is coupled via a rotary mechanism of the central stalk subunits to proton translocation. Functionally, key component of the F(0) channel; it plays a direct role in translocation across the membrane. A homomeric c-ring of between 10-14 subunits forms the central stalk rotor element with the F(1) delta and epsilon subunits. The chain is ATP synthase subunit c from Shewanella halifaxensis (strain HAW-EB4).